The sequence spans 202 residues: MVLRGRAVLLAVLLAAGSLGRWAQKPRGAPSAISAIQPKANFDAQQFAGTWLLAAVGSACHFLQEQGHRAEATALHVAPQGAAMAVSTFRKLDGICWQVSQRYGATGVPGRFLLPARGPRGAVHVVAAETDYHSFAVLYLERARQLSVKLYVRSLPVSDSVLGAFEQRVAQANLTQDQVLFFPTYGFCEAADQFHILDEVRR.

A signal peptide spans 1–23 (MVLRGRAVLLAVLLAAGSLGRWA). The cysteines at positions 96 and 188 are disulfide-linked. Asn173 carries an N-linked (GlcNAc...) asparagine glycan.

The protein belongs to the calycin superfamily. Lipocalin family. Heterotrimer of 3 chains: alpha (C8A), beta (C8B) and gamma (C8G); the alpha and gamma chains are disulfide bonded. Component of the membrane attack complex (MAC), composed of complement C5b, C6, C7, C8A, C8B, C8G and multiple copies of the pore-forming subunit C9.

It is found in the secreted. It localises to the target cell membrane. With respect to regulation, membrane attack complex (MAC) assembly is inhibited by CD59, thereby protecting self-cells from damage during complement activation. MAC assembly is also inhibited by clusterin (CLU) chaperones that inhibit polymerization of C9. Functionally, component of the membrane attack complex (MAC), a multiprotein complex activated by the complement cascade, which inserts into a target cell membrane and forms a pore, leading to target cell membrane rupture and cell lysis. The MAC is initiated by proteolytic cleavage of C5 into complement C5b in response to the classical, alternative, lectin and GZMK complement pathways. The complement pathways consist in a cascade of proteins that leads to phagocytosis and breakdown of pathogens and signaling that strengthens the adaptive immune system. C8G, together with C8A and C8B, inserts into the target membrane, but does not form pores by itself. During MAC assembly, associates with C5b, C6 and C7 to form the C5b8 intermediate complex that inserts into the target membrane and traverses the bilayer increasing membrane rigidity. In Oryctolagus cuniculus (Rabbit), this protein is Complement component C8 gamma chain (C8G).